Reading from the N-terminus, the 177-residue chain is Large ribosomal subunit protein uL6 (177 aa).

The protein belongs to the universal ribosomal protein uL6 family. As to quaternary structure, part of the 50S ribosomal subunit.

Its function is as follows. This protein binds to the 23S rRNA, and is important in its secondary structure. It is located near the subunit interface in the base of the L7/L12 stalk, and near the tRNA binding site of the peptidyltransferase center. This Afipia carboxidovorans (strain ATCC 49405 / DSM 1227 / KCTC 32145 / OM5) (Oligotropha carboxidovorans) protein is Large ribosomal subunit protein uL6.